The primary structure comprises 242 residues: Lysosomal membrane ascorbate-dependent ferrireductase CYB561A3 (242 aa).

At 1 to 4 the chain is on the cytoplasmic side; it reads MASG. A helical transmembrane segment spans residues 5-25; it reads WFYLSCMVLGSLGSMCILFTA. Residues 12–219 enclose the Cytochrome b561 domain; sequence VLGSLGSMCI…FGLLVLYVLL (208 aa). Residues 26-40 are Lumenal-facing; that stretch reads YWMQYWRGGFAWDGT. The helical transmembrane segment at 41-61 threads the bilayer; the sequence is VLMFNWHPVLMVAGMVVLYGA. Heme b is bound by residues His47 and Arg67. Over 62-81 the chain is Cytoplasmic; sequence ASLVYRLPSSWVGPRLPWKV. L-ascorbate-binding residues include Arg76 and Lys80. The helical transmembrane segment at 82–102 threads the bilayer; it reads LHAALHLLAFTCTVVGLIAVF. Residues His83, 112-115, and His117 contribute to the heme b site; that span reads HLYS. At 103–119 the chain is on the lumenal side; sequence RFHNHSRIAHLYSLHSW. Residues 120–140 traverse the membrane as a helical segment; that stretch reads LGITTVVLFACQWFLGFAVFL. Residues 141–154 are Cytoplasmic-facing; that stretch reads LPWASQWLRSLLKP. Position 149 (Arg149) interacts with L-ascorbate. Residues 155 to 175 traverse the membrane as a helical segment; it reads LHVFFGACILSLSITSVISGI. His156 and Glu177 together coordinate heme b. At 176-202 the chain is on the lumenal side; it reads NEKLFFVLKNATKPYSSLPGEAVFANS. Residues 203–223 form a helical membrane-spanning segment; sequence TGLLVVAFGLLVLYVLLASSW. Position 224 (Lys224) interacts with heme b. Over 224 to 242 the chain is Cytoplasmic; it reads KRPDPGALTDRQPLLHDRE.

In terms of assembly, homodimer. Requires heme b as cofactor. In terms of processing, N-glycosylated. Present in lung, spleen, thymus and testis. Present at low level in brain, heart, liver and kidney. Expressed in the alveolar macrophages of the lung, in the white pulp of the spleen, widespread in the thymus, and in the Sertoli cells of the testis (at protein level).

It localises to the late endosome membrane. The protein resides in the lysosome membrane. It carries out the reaction Fe(3+)(out) + L-ascorbate(in) = monodehydro-L-ascorbate radical(in) + Fe(2+)(out) + H(+). Transmembrane reductase that uses ascorbate as an electron donor in the cytoplasm and transfers electrons across membranes to reduce iron cations Fe(3+) into Fe(2+) in the lumen of the late endosome and lysosome. Reduced iron can then be extruded from the late endosome and lysosome to the cytoplasm by divalent metal-specific transporters. It is therefore most probably involved in endosomal and lysosomal cellular iron homeostasis. This Mus musculus (Mouse) protein is Lysosomal membrane ascorbate-dependent ferrireductase CYB561A3.